Reading from the N-terminus, the 488-residue chain is Bile acid receptor (488 aa).

Residue lysine 133 forms a Glycyl lysine isopeptide (Lys-Gly) (interchain with G-Cter in SUMO1) linkage. A DNA-binding region (nuclear receptor) is located at residues 135–210 (DELCVVCGDR…MGMLAECMYT (76 aa)). Residues 138–158 (CVVCGDRASGYHYNALTCEGC) form an NR C4-type zinc finger. Residues serine 146 and serine 165 each carry the phosphoserine; by PKC/PRKCA modification. An N6-acetyllysine; by EP300 modification is found at lysine 168. The NR C4-type zinc-finger motif lies at 174 to 198 (CKNGGNCVMDMYMRRKCQECRLRKC). N6-methyllysine; by SETD7 is present on lysine 221. Lysine 228 carries the N6-acetyllysine; by EP300 modification. The region spanning 264–488 (DQQTLLDYIM…PLLCEIWDVQ (225 aa)) is the NR LBD domain. Lysine 291 is covalently cross-linked (Glycyl lysine isopeptide (Lys-Gly) (interchain with G-Cter in SUMO1)). The chenodeoxycholate site is built by arginine 347, tyrosine 377, and tyrosine 385. The residue at position 458 (threonine 458) is a Phosphothreonine; by PKC/PRKCZ. Chenodeoxycholate is bound at residue histidine 463.

The protein belongs to the nuclear hormone receptor family. NR1 subfamily. In terms of assembly, heterodimer with RXRA; the heterodimerization enhances the binding affinity for LXXLL motifs from coactivators. Binds DNA predominantly as a heterodimer with RXRA. After activation by agonist binding interacts with coactivators. Interacts with PPARGC1A, SMARCA4 and EP300. Interacts with NCOA1, NCOA2, CARM1, SETD7, PRMT1, GPS2, SMARCA4 and MED1. Interacts with XRCC5 and XRCC6; decreasing NR1H4/FXR transactivation activity towards ABCB11/BSEP. Interacts with PAGR1 and NCOA6; indicative for an association with an MLL2/MLL3 complex (ASCOM). Interacts with NR5A2. Acetylated by EP300. Lys-228 as is the major acetylation site for EP300; the dynamicly regulated acetylation inhibits heterodimerization with RXRA and transactivation activity. Deacetylated by SIRT1. Elevated acetylation levels are found in metabolic disease states (mouse models of obesity and type II diabetes). In terms of processing, methylation may increase transactivation of target genes. Post-translationally, phosphorylation by PKC/PRKCA increases transactivation activity by promoting association with PPARGC1A. Sumoylated upon ligand binding. Expressed in liver and kidney. Expressed in pancreatic beta cells and macrophages. Expressed in the villus epithelium in adult ileum, with highest expression in the intervillus regions. Expression in colon is reduced by inflammation.

It is found in the nucleus. In terms of biological role, ligand-activated transcription factor. Receptor for bile acids (BAs) such as chenodeoxycholic acid (CDCA), lithocholic acid, deoxycholic acid (DCA) and allocholic acid (ACA). Plays a essential role in BA homeostasis through the regulation of genes involved in BA synthesis, conjugation and enterohepatic circulation. Also regulates lipid and glucose homeostasis and is involved in innate immune response. The FXR-RXR heterodimer binds predominantly to farnesoid X receptor response elements (FXREs) containing two inverted repeats of the consensus sequence 5'-AGGTCA-3' in which the monomers are spaced by 1 nucleotide (IR-1) but also to tandem repeat DR1 sites with lower affinity, and can be activated by either FXR or RXR-specific ligands. It is proposed that monomeric nuclear receptors such as NR5A2/LRH-1 bound to coregulatory nuclear responsive element (NRE) halfsites located in close proximity to FXREs modulate transcriptional activity. In the liver activates transcription of the corepressor NR0B2 thereby indirectly inhibiting CYP7A1 and CYP8B1 (involved in BA synthesis) implicating at least in part histone demethylase KDM1A resulting in epigenomic repression, and SLC10A1/NTCP (involved in hepatic uptake of conjugated BAs). Activates transcription of the repressor MAFG (involved in regulation of BA synthesis). Activates transcription of SLC27A5/BACS and BAAT (involved in BA conjugation), ABCB11/BSEP (involved in bile salt export) by directly recruiting histone methyltransferase CARM1, and ABCC2/MRP2 (involved in secretion of conjugated BAs) and ABCB4 (involved in secretion of phosphatidylcholine in the small intestine). In ileal enterocytes activates FABP6/IBABP (involved in cytosolic transport), SLC51A/OSTA and SLC51B/OSTB (involved in secretion of conjugated BAs to the portal blood), and repressor NR0B2/SHP thereby indirectly inhibiting SLC10A2/ASBT (involved in BA uptake). In the intestine activates FGF15 expression and secretion leading to hepatic CYP7A1 repression; the function also involves the coordinated induction of hepatic KLB/beta-klotho expression. Transcriptional activation of FABP6/IBAP and SCD1 but not of ABCB11 is isoform-specific. Regulates transcription of liver UGT2B4 and SULT2A1 involved in BA detoxification; binding to the UGT2B4 promoter seems to imply a monomeric transactivation independent of RXRA. Modulates lipid homeostasis by activating liver NR0B2/SHP-mediated repression of SREBF1 isoform SREBP-1C (involved in de novo lipogenesis), expression of PLTP (involved in HDL formation), SCARB1 (involved in HDL hepatic uptake), APOE, APOC1, APOC4, VLDLR and SDC1 (involved in the hepatic uptake of LDL and IDL remnants), and inhibiting expression of MTTP (involved in VLDL assembly). Increases expression of APOC2 (promoting lipoprotein lipase activity implicated in triglyceride clearance). Transrepresses APOA1 probably involving a monomeric competition with NR2A1 for binding to a DR1 element. Also reduces triglyceride clearance by inhibiting expression of ANGPTL3 and APOC3 (both involved in inhibition of lipoprotein lipase). Involved in glucose homeostasis by modulating hepatic gluconeogenesis through activation of NR0B2/SHP-mediated repression of respective genes. Modulates glycogen synthesis (inducing phosphorylation of glycogen synthase kinase-3). Modulates glucose-stimulated insulin secretion and is involved in insulin resistance. Involved in intestinal innate immunity. Plays a role in protecting the distal small intestine against bacterial overgrowth and preservation of the epithelial barrier. Down-regulates inflammatory cytokine expression in several types of immune cells including macrophages and mononuclear cells. Mediates transrepression of TLR4-induced cytokine expression; the function seems to require its sumoylation and prevents N-CoR nuclear receptor corepressor clearance from target genes such as IL1B and NOS2. Involved in the TLR9-mediated protective mechanism in intestinal inflammation. Plays a anti-inflammatory role in liver inflammation; proposed to inhibit pro-inflammatory (but not antiapoptotic) NF-kappa-B signaling. Its function is as follows. Activates transcription of IBAP and SDC1. This Mus musculus (Mouse) protein is Bile acid receptor (Nr1h4).